The primary structure comprises 208 residues: Type 4 adapter protein LvgA (208 aa).

The disordered stretch occupies residues 184–208; the sequence is GYGYPPESPRENYKHPVSSATTARK.

The T4BSS is a complex nanomachine composed of several subcomplexes. This subunit is part of the Type IV Coupling Complex (T4CC), a subcomplex composed of the DotLMNYZ core and the IcmSW-LvgA adapter subunits, linked by the C-terminal tail of DotL.

The protein resides in the cytoplasm. Functionally, component of the Dot/Icm type IVB secretion system (T4BSS), which is used to inject bacterial effector proteins into eukaryotic host cells. Part of a subcomplex which recruits effector proteins and delivers them to the core transmembrane subcomplex. Is a critical subunit for binding a subset of effector proteins. Recognizes more than one type of binding motif. May be a critical factor that confers host specificity. Necessary for full virulence of the bacterium in guinea pigs and presumably humans. The sequence is that of Type 4 adapter protein LvgA from Legionella pneumophila.